The sequence spans 66 residues: UPF0337 protein SpyM3_0896 (66 aa).

It belongs to the UPF0337 (CsbD) family.

This Streptococcus pyogenes serotype M3 (strain ATCC BAA-595 / MGAS315) protein is UPF0337 protein SpyM3_0896.